Consider the following 209-residue polypeptide: Thiamine-phosphate synthase (209 aa).

4-amino-2-methyl-5-(diphosphooxymethyl)pyrimidine contacts are provided by residues 38 to 42 (QLREK) and Asn-70. Residues Asp-71 and Asp-90 each contribute to the Mg(2+) site. Ser-109 contributes to the 4-amino-2-methyl-5-(diphosphooxymethyl)pyrimidine binding site. 2-[(2R,5Z)-2-carboxy-4-methylthiazol-5(2H)-ylidene]ethyl phosphate is bound at residue 135–137 (TPT). Lys-138 contacts 4-amino-2-methyl-5-(diphosphooxymethyl)pyrimidine. Residues Gly-166 and 186–187 (IS) each bind 2-[(2R,5Z)-2-carboxy-4-methylthiazol-5(2H)-ylidene]ethyl phosphate.

It belongs to the thiamine-phosphate synthase family. Mg(2+) serves as cofactor.

The enzyme catalyses 2-[(2R,5Z)-2-carboxy-4-methylthiazol-5(2H)-ylidene]ethyl phosphate + 4-amino-2-methyl-5-(diphosphooxymethyl)pyrimidine + 2 H(+) = thiamine phosphate + CO2 + diphosphate. It carries out the reaction 2-(2-carboxy-4-methylthiazol-5-yl)ethyl phosphate + 4-amino-2-methyl-5-(diphosphooxymethyl)pyrimidine + 2 H(+) = thiamine phosphate + CO2 + diphosphate. The catalysed reaction is 4-methyl-5-(2-phosphooxyethyl)-thiazole + 4-amino-2-methyl-5-(diphosphooxymethyl)pyrimidine + H(+) = thiamine phosphate + diphosphate. It functions in the pathway cofactor biosynthesis; thiamine diphosphate biosynthesis; thiamine phosphate from 4-amino-2-methyl-5-diphosphomethylpyrimidine and 4-methyl-5-(2-phosphoethyl)-thiazole: step 1/1. Condenses 4-methyl-5-(beta-hydroxyethyl)thiazole monophosphate (THZ-P) and 2-methyl-4-amino-5-hydroxymethyl pyrimidine pyrophosphate (HMP-PP) to form thiamine monophosphate (TMP). The chain is Thiamine-phosphate synthase from Syntrophomonas wolfei subsp. wolfei (strain DSM 2245B / Goettingen).